We begin with the raw amino-acid sequence, 483 residues long: Regulatory protein ViaA (483 aa).

This sequence belongs to the ViaA family. As to quaternary structure, homodimer. Interacts with RavA.

It is found in the cytoplasm. Its function is as follows. Component of the RavA-ViaA chaperone complex, which may act on the membrane to optimize the function of some of the respiratory chains. ViaA stimulates the ATPase activity of RavA. In Salmonella agona (strain SL483), this protein is Regulatory protein ViaA.